The primary structure comprises 298 residues: Olfactory receptor 52Z1P (298 aa).

Residues 1 to 14 (MGIPGLEGLHTWIS) lie on the Extracellular side of the membrane. Residues 15–35 (IPFSFMYIVAVAGNIFLIFLI) traverse the membrane as a helical segment. Over 36 to 43 (MTERSLHE) the chain is Cytoplasmic. Residues 44-64 (PMYLFLSMLASADFLLATAAA) form a helical membrane-spanning segment. Topologically, residues 65–85 (PKVLAILWFHSMDISFGSCVS) are extracellular. Cysteines 83 and 164 form a disulfide. The chain crosses the membrane as a helical span at residues 86-106 (QMFFIHFIFVAESAILLAMAF). At 107 to 128 (DRYVAICYPLRYTILTSSAVRK) the chain is on the cytoplasmic side. Residues 129–149 (IGIAAVVRSFFICCPFIFLVY) form a helical membrane-spanning segment. Residues 150–178 (RLTYCGRNIIPHSYCEHIARLACGNINVN) are Extracellular-facing. A helical transmembrane segment spans residues 179 to 199 (IIYGLTVALLSTGLDIVLIII). Residues 200 to 223 (SYTMILHSVFQISSWAARFKALST) are Cytoplasmic-facing. A helical membrane pass occupies residues 224–244 (CGSHICVIFMFYTPAFFSFLA). Residues 245–257 (HRFGGKTIPHHIH) lie on the Extracellular side of the membrane. A helical transmembrane segment spans residues 258–278 (ILVGSLYVLVPPMLNPIIYGV). The Cytoplasmic portion of the chain corresponds to 279–298 (KTKQIKDRVILLFSPISVCC).

It belongs to the G-protein coupled receptor 1 family.

It is found in the cell membrane. Functionally, odorant receptor. The protein is Olfactory receptor 52Z1P of Homo sapiens (Human).